We begin with the raw amino-acid sequence, 102 residues long: Large ribosomal subunit protein bL21 (102 aa).

The protein belongs to the bacterial ribosomal protein bL21 family. In terms of assembly, part of the 50S ribosomal subunit. Contacts protein L20.

This protein binds to 23S rRNA in the presence of protein L20. The chain is Large ribosomal subunit protein bL21 from Citrifermentans bemidjiense (strain ATCC BAA-1014 / DSM 16622 / JCM 12645 / Bem) (Geobacter bemidjiensis).